The primary structure comprises 382 residues: MAQYSLFTSESVSEGHPDKMADQISDAILDAILADDKNARVAVETMVKTGMAIVAGEVRTSTYIDLEDLIRDVILDIGYNSSDVGFDGASCAVLNAIGKQSADIAMGVDEANNKDLGAGDQGLMFGYATNETDVLMPAPIYYSHRLVEKQAELRKNGKLNWLRPDAKSQVTLRYDNGKPVAVDAVVLSTQHNPDVSQATIREAVMEEIIKTTLPAEWLHADTKYHINPTGQFIIGGPVGDCGLTGRKIIVDTYGGMARHGGGAFSGKDPSKVDRSAAYAGRYVAKNIVAAGLASRCEIQVSYAIGVAEPTSISVNTFGTGSIADSEISKLVAQHFDLRPRGIIEMLDLLRPIYRKTAAYGHFGREEPEFTWEKTDKVAALQG.

His-16 contacts ATP. Asp-18 is a Mg(2+) binding site. Glu-44 contributes to the K(+) binding site. L-methionine contacts are provided by Glu-57 and Gln-100. Positions 100–110 (QSADIAMGVDE) are flexible loop. Residues 165-167 (DAK), Asp-240, 246-247 (RK), Ala-263, and Lys-267 each bind ATP. Asp-240 lines the L-methionine pocket. Lys-271 is a binding site for L-methionine.

Belongs to the AdoMet synthase family. In terms of assembly, homotetramer; dimer of dimers. Mg(2+) is required as a cofactor. It depends on K(+) as a cofactor.

It is found in the cytoplasm. It catalyses the reaction L-methionine + ATP + H2O = S-adenosyl-L-methionine + phosphate + diphosphate. It functions in the pathway amino-acid biosynthesis; S-adenosyl-L-methionine biosynthesis; S-adenosyl-L-methionine from L-methionine: step 1/1. Catalyzes the formation of S-adenosylmethionine (AdoMet) from methionine and ATP. The overall synthetic reaction is composed of two sequential steps, AdoMet formation and the subsequent tripolyphosphate hydrolysis which occurs prior to release of AdoMet from the enzyme. The chain is S-adenosylmethionine synthase from Saccharophagus degradans (strain 2-40 / ATCC 43961 / DSM 17024).